The primary structure comprises 400 residues: Tryptophan synthase beta chain (400 aa).

N6-(pyridoxal phosphate)lysine is present on Lys-95.

Belongs to the TrpB family. As to quaternary structure, tetramer of two alpha and two beta chains. Pyridoxal 5'-phosphate serves as cofactor.

The enzyme catalyses (1S,2R)-1-C-(indol-3-yl)glycerol 3-phosphate + L-serine = D-glyceraldehyde 3-phosphate + L-tryptophan + H2O. It functions in the pathway amino-acid biosynthesis; L-tryptophan biosynthesis; L-tryptophan from chorismate: step 5/5. Functionally, the beta subunit is responsible for the synthesis of L-tryptophan from indole and L-serine. This Chlorobaculum tepidum (strain ATCC 49652 / DSM 12025 / NBRC 103806 / TLS) (Chlorobium tepidum) protein is Tryptophan synthase beta chain.